The following is a 137-amino-acid chain: Large ribosomal subunit protein uL11 (137 aa).

It belongs to the universal ribosomal protein uL11 family. In terms of assembly, part of the ribosomal stalk of the 50S ribosomal subunit. Interacts with L10 and the large rRNA to form the base of the stalk. L10 forms an elongated spine to which L12 dimers bind in a sequential fashion forming a multimeric L10(L12)X complex. One or more lysine residues are methylated.

Its function is as follows. Forms part of the ribosomal stalk which helps the ribosome interact with GTP-bound translation factors. In Mycoplasma pneumoniae (strain ATCC 29342 / M129 / Subtype 1) (Mycoplasmoides pneumoniae), this protein is Large ribosomal subunit protein uL11.